The sequence spans 256 residues: DNA repair protein RecO (256 aa).

The protein belongs to the RecO family.

Involved in DNA repair and RecF pathway recombination. The chain is DNA repair protein RecO from Clostridium novyi (strain NT).